Reading from the N-terminus, the 182-residue chain is MSSVMMCCCLLLLFGLLSEGREILVGGKSNTWKAPESRDETLNQWSGRTRFKIGDSLLWKYNAENDSVLQVRQTDYERCDRSEPIRGYKDGHTNIELKRSGPFYFISGEEGHCQRGEKLRVVVLSPNHNRSVVDAPAPVNIVLSPNYNRSVAAAPLNAHIMNKGSLNTAWSLLLLLPLGLLV.

The first 20 residues, 1-20 (MSSVMMCCCLLLLFGLLSEG), serve as a signal peptide directing secretion. The 105-residue stretch at 21–125 (REILVGGKSN…GEKLRVVVLS (105 aa)) folds into the Phytocyanin domain. Asparagine 65 is a glycosylation site (N-linked (GlcNAc...) asparagine). Cysteine 79 and cysteine 113 are oxidised to a cystine. N-linked (GlcNAc...) asparagine glycosylation is found at asparagine 129 and asparagine 148. Asparagine 157 carries GPI-anchor amidated asparagine lipidation. The propeptide at 158 to 182 (AHIMNKGSLNTAWSLLLLLPLGLLV) is removed in mature form.

It belongs to the early nodulin-like (ENODL) family. Mostly expressed in flowers, and, to a lower extent, in leaves, but barely in seedlings, stems, seeds and roots.

It is found in the cell membrane. May act as a carbohydrate transporter. The chain is Early nodulin-like protein 10 from Arabidopsis thaliana (Mouse-ear cress).